A 249-amino-acid polypeptide reads, in one-letter code: Benzil reductase ((S)-benzoin forming) (249 aa).

NADP(+) is bound by residues Ile6, Asn87, Tyr154, Lys158, Val189, and Thr191. Tyr154 serves as the catalytic Proton acceptor.

It belongs to the short-chain dehydrogenases/reductases (SDR) family.

The protein resides in the cytoplasm. The catalysed reaction is (S)-benzoin + NADP(+) = benzil + NADPH + H(+). The enzyme catalyses 2-hydroxy-1-phenyl-1-propanone + NADP(+) = 1-phenyl-1,2-propanedione + NADPH + H(+). With respect to regulation, inhibited by Cibacron blue 3GA, a general SDR family inhibitor. In terms of biological role, reduces benzil stereospecifically to (S)-benzoin. Can also reduce 1-phenyl-1,2-propanedione, 1,4-naphthoquinone, 1-(4-methyl-phenyl)-2-phenyl-ethane-1,2-dione, 1-(4-fluoro-phenyl)-2-phenyl-ethane-1,2-dione, methyl benzoylformate and p-nitrobenzaldehyde in decreasing order. The chain is Benzil reductase ((S)-benzoin forming) from Bacillus cereus.